The primary structure comprises 751 residues: Semaphorin-3C (751 aa).

The first 21 residues, 1–21 (MAFQAVCILVGVFVCSTYVKG), serve as a signal peptide directing secretion. One can recognise a Sema domain in the interval 28–511 (RVYLTFDELR…SNEGLAQVSL (484 aa)). N-linked (GlcNAc...) asparagine glycosylation occurs at Asn81. Cys101 and Cys112 form a disulfide bridge. An N-linked (GlcNAc...) asparagine glycan is attached at Asn123. Cystine bridges form between Cys130/Cys139, Cys266/Cys378, and Cys290/Cys338. The N-linked (GlcNAc...) asparagine glycan is linked to Asn268. A glycan (N-linked (GlcNAc...) asparagine) is linked at Asn465. Cys514 and Cys532 are oxidised to a cystine. In terms of domain architecture, Ig-like C2-type spans 571 to 655 (AYRNAAEIVQ…TENSFKQTIA (85 aa)). Asn585 and Asn586 each carry an N-linked (GlcNAc...) asparagine glycan. Cys592 and Cys643 are oxidised to a cystine. A compositionally biased stretch (basic and acidic residues) spans 712–731 (TRQQHQQGEESQKMRGDYGK). The tract at residues 712 to 751 (TRQQHQQGEESQKMRGDYGKLKALINSRKSRNRRNQLPES) is disordered.

It belongs to the semaphorin family. As to quaternary structure, interacts with PLXND1.

The protein resides in the secreted. Functionally, binds to plexin family members and plays an important role in the regulation of developmental processes. Required for normal cardiovascular development during embryogenesis. Functions as attractant for growing axons, and thereby plays an important role in axon growth and axon guidance. In Bos taurus (Bovine), this protein is Semaphorin-3C (SEMA3C).